The following is a 230-amino-acid chain: MYRERAFNAPARASGVDLLDAAAYGQQSNGDRRGEPRFGGDIERLIGTQTGKVRLLPGTTFVTEIAMRNKIPKKFLDTILLELRNVLCVRRRVHMAGIRLSKPASEIMIGQVIRALDGPLAPIHCASRSAFACDDCNDPVYRQSVLVICHRGKKLGYGVAAWLRNASRVELSDVSRRIIAQHQLRISQRPRAHQYCPASRRNHRNEIEMGGPLRFGIIVRLDRHTQSLVN.

This is an uncharacterized protein from Sinorhizobium fredii (strain NBRC 101917 / NGR234).